A 245-amino-acid chain; its full sequence is MLQFTPPLQPATLILRYKRFLADIVTPAGEALTIHCANTGAMTGCATPGDTIWYSTSDNPKRKYPQSWELTQTQTGDWICVNTMRANELVNLAIEKNQIAELSGYNFVRKEVKYGEENSRIDLLLQAEDRRDCYIEVKSVTLLQQQCGYFPDAVTLRGQKHLRELQNRVVNGHRAVLFFAVLHTGIKQVAPARHIDRRYAELLVQAQQAGVEVICYGFQLSPDGIELNTRLPLLQDEMLSSENAE.

The protein belongs to the SfsA family.

The polypeptide is Sugar fermentation stimulation protein homolog (Yersinia pseudotuberculosis serotype I (strain IP32953)).